The chain runs to 433 residues: Enolase (433 aa).

Glutamine 167 is a binding site for (2R)-2-phosphoglycerate. Glutamate 209 acts as the Proton donor in catalysis. Residues aspartate 246, glutamate 291, and aspartate 318 each coordinate Mg(2+). Positions 343, 372, 373, and 394 each coordinate (2R)-2-phosphoglycerate. Lysine 343 (proton acceptor) is an active-site residue.

The protein belongs to the enolase family. As to quaternary structure, component of the RNA degradosome, a multiprotein complex involved in RNA processing and mRNA degradation. Mg(2+) serves as cofactor.

The protein localises to the cytoplasm. It localises to the secreted. It is found in the cell surface. It carries out the reaction (2R)-2-phosphoglycerate = phosphoenolpyruvate + H2O. It participates in carbohydrate degradation; glycolysis; pyruvate from D-glyceraldehyde 3-phosphate: step 4/5. Functionally, catalyzes the reversible conversion of 2-phosphoglycerate (2-PG) into phosphoenolpyruvate (PEP). It is essential for the degradation of carbohydrates via glycolysis. This chain is Enolase, found in Haemophilus ducreyi (strain 35000HP / ATCC 700724).